We begin with the raw amino-acid sequence, 156 residues long: Peroxisome assembly protein 22 (156 aa).

A helical membrane pass occupies residues Leu-24–Tyr-46.

This sequence belongs to the peroxin-22 family.

The protein resides in the peroxisome membrane. Its function is as follows. Involved in peroxisome biogenesis. In Kluyveromyces lactis (strain ATCC 8585 / CBS 2359 / DSM 70799 / NBRC 1267 / NRRL Y-1140 / WM37) (Yeast), this protein is Peroxisome assembly protein 22 (PEX22).